We begin with the raw amino-acid sequence, 140 residues long: HTH-type transcriptional regulator YfmP (140 aa).

Residues 1-73 (MEWMKIDQVA…LQELQHFMET (73 aa)) enclose the HTH merR-type domain. The H-T-H motif DNA-binding region spans 6–25 (IDQVAKRSGLTKRTIRFYEE).

Its function is as follows. Repressor of the yfmOP operon. A mutation in yfmP leads to overexpression of yfmO, probably causing a decrease in cellular copper that is eventually responsible for a reduced copper induction of copZA. This Bacillus subtilis (strain 168) protein is HTH-type transcriptional regulator YfmP (yfmP).